The primary structure comprises 324 residues: Cyclin-dependent kinase 1 (324 aa).

One can recognise a Protein kinase domain in the interval Tyr-4 to Phe-307. Residues Ile-10 to Val-18 and Lys-34 each bind ATP. The residue at position 14 (Thr-14) is a Phosphothreonine. Tyr-15 is subject to Phosphotyrosine. Asp-148 serves as the catalytic Proton acceptor. Thr-181 carries the phosphothreonine; by CAK modification.

The protein belongs to the protein kinase superfamily. CMGC Ser/Thr protein kinase family. CDC2/CDKX subfamily. Forms a stable but non-covalent complex with a regulatory subunit (SUC1) and with a cyclin.

It carries out the reaction L-seryl-[protein] + ATP = O-phospho-L-seryl-[protein] + ADP + H(+). The catalysed reaction is L-threonyl-[protein] + ATP = O-phospho-L-threonyl-[protein] + ADP + H(+). With respect to regulation, phosphorylation at Thr-14 or Tyr-15 inactivates the enzyme, while phosphorylation at Thr-181 activates it. Functionally, cyclin-dependent kinase that acts as a master regulator of the mitotic and meiotic cell cycles. This chain is Cyclin-dependent kinase 1, found in Ajellomyces capsulatus (Darling's disease fungus).